The chain runs to 490 residues: Limb region 1 protein (490 aa).

Over 1 to 19 (MEGQDEVSAREQHFHSQVR) the chain is Extracellular. Residues 20–40 (ESTICFLLFAILYIVSYFIII) form a helical membrane-spanning segment. Over 41–62 (RYKRKSDEQEDEDAVVNRISLF) the chain is Cytoplasmic. Residues 63–83 (LSTFTLAVSAGAVLLLPFSII) traverse the membrane as a helical segment. The Extracellular portion of the chain corresponds to 84-110 (SNEILLAFPHNYYIQWLNGSLIHGLWN). The helical transmembrane segment at 111–131 (LASLFSNLCLFVLMPFAFFFL) threads the bilayer. The Cytoplasmic portion of the chain corresponds to 132 to 151 (ESEGFAGLKKGIRARILETL). Residues 152–172 (VMLLLLALLILGMVWVASALI) traverse the membrane as a helical segment. The Extracellular segment spans residues 173–187 (DSDAASMESLYDLWE). Residues 188 to 208 (FYLPYLYSCISLMGCLLLLLC) traverse the membrane as a helical segment. The Cytoplasmic segment spans residues 209–291 (TPVGLSRMFT…RKKASAWERN (83 aa)). Positions 256 to 287 (SSVEYNVMELEQELENVKILKTKLERRKKASA) form a coiled coil. The chain crosses the membrane as a helical span at residues 292-312 (LVYPAVMVLLLIETSISVLLV). Topologically, residues 313–339 (ACNILCLLVDETAMPKGTRGPGIGSAS) are extracellular. Residues 340 to 360 (LSTFGFVGAALEIILIFYLMV) traverse the membrane as a helical segment. Residues 361–383 (SSVVGFYSLRFFGNFTPKKDDTT) are Cytoplasmic-facing. A helical transmembrane segment spans residues 384-404 (MTKIIGNCVSILVLSSALPVM). Residues 405–426 (SRTLGITRFDLLGDFGRFNWLG) are Extracellular-facing. A helical membrane pass occupies residues 427–447 (NFYIVLSYNLLFAIMTTLCLI). At 448-490 (RKFTSAVREELFKALGLHKLHLSDTSRDSETTKPSANGHQKAL) the chain is on the cytoplasmic side.

It belongs to the LIMR family.

It is found in the membrane. Functionally, putative membrane receptor. This chain is Limb region 1 protein (Lmbr1), found in Mus musculus (Mouse).